Consider the following 259-residue polypeptide: Ribonuclease HII (259 aa).

In terms of domain architecture, RNase H type-2 spans 70–258 (TLIAGIDEVG…VKSLVLGKKE (189 aa)). Asp-76, Glu-77, and Asp-168 together coordinate a divalent metal cation.

This sequence belongs to the RNase HII family. It depends on Mn(2+) as a cofactor. Mg(2+) serves as cofactor.

The protein resides in the cytoplasm. The catalysed reaction is Endonucleolytic cleavage to 5'-phosphomonoester.. Functionally, endonuclease that specifically degrades the RNA of RNA-DNA hybrids. In Streptococcus pneumoniae (strain Taiwan19F-14), this protein is Ribonuclease HII.